The chain runs to 337 residues: Phosphate acyltransferase (337 aa).

The protein belongs to the PlsX family. As to quaternary structure, homodimer. Probably interacts with PlsY.

The protein localises to the cytoplasm. It catalyses the reaction a fatty acyl-[ACP] + phosphate = an acyl phosphate + holo-[ACP]. Its pathway is lipid metabolism; phospholipid metabolism. Functionally, catalyzes the reversible formation of acyl-phosphate (acyl-PO(4)) from acyl-[acyl-carrier-protein] (acyl-ACP). This enzyme utilizes acyl-ACP as fatty acyl donor, but not acyl-CoA. The chain is Phosphate acyltransferase from Latilactobacillus sakei subsp. sakei (strain 23K) (Lactobacillus sakei subsp. sakei).